Reading from the N-terminus, the 385-residue chain is Putative F-box protein At1g47765 (385 aa).

Residues 1 to 19 (MEQQKQKKRKVVSKSKRTQ) show a composition bias toward basic residues. Positions 1-24 (MEQQKQKKRKVVSKSKRTQSKSAS) are disordered. The region spanning 20–69 (SKSASSLPLDLTSEILLRLPEKSIARFRCVSKLWLSITTDPYFINLFETR) is the F-box domain.

This is Putative F-box protein At1g47765 from Arabidopsis thaliana (Mouse-ear cress).